Reading from the N-terminus, the 352-residue chain is [LysW]-L-2-aminoadipate/[LysW]-L-glutamate phosphate reductase (352 aa).

Residue 13 to 16 coordinates NADP(+); the sequence is SGYT. Cys153 is a catalytic residue. Asn319 lines the NADP(+) pocket.

It belongs to the NAGSA dehydrogenase family. Type 1 subfamily. LysY sub-subfamily.

It localises to the cytoplasm. The enzyme catalyses [amino-group carrier protein]-C-terminal-N-(1-carboxy-5-oxopentan-1-yl)-L-glutamine + phosphate + NADP(+) = [amino-group carrier protein]-C-terminal-N-(1-carboxy-5-phosphooxy-5-oxopentan-1-yl)-L-glutamine + NADPH + H(+). The catalysed reaction is [amino-group carrier protein]-C-terminal-gamma-(L-glutamyl-5-semialdehyde)-L-glutamate + phosphate + NADP(+) = [amino-group carrier protein]-C-terminal-gamma-(5-phospho-L-glutamyl)-L-glutamate + NADPH + H(+). It participates in amino-acid biosynthesis; L-lysine biosynthesis via AAA pathway; L-lysine from L-alpha-aminoadipate (Thermus route): step 3/5. The protein operates within amino-acid biosynthesis; L-arginine biosynthesis. In terms of biological role, involved in both the arginine and lysine biosynthetic pathways. This chain is [LysW]-L-2-aminoadipate/[LysW]-L-glutamate phosphate reductase, found in Saccharolobus solfataricus (strain ATCC 35092 / DSM 1617 / JCM 11322 / P2) (Sulfolobus solfataricus).